We begin with the raw amino-acid sequence, 535 residues long: Probable lipid II flippase MurJ (535 aa).

Helical transmembrane passes span 90 to 110 (VLFT…PFIV), 131 to 151 (FATI…MAGM), 159 to 179 (FAAA…LAYA), 192 to 212 (DLSW…WVAV), 233 to 253 (LLVL…NLLI), 274 to 294 (IYQL…LPEL), 316 to 336 (FTLF…EPIV), 350 to 370 (TVVV…FVLI), 388 to 408 (IFAG…FPSL), 413 to 433 (IATA…ATLV), 451 to 471 (LVIA…WLAF), and 484 to 504 (LTLC…AFGI).

Belongs to the MurJ/MviN family.

It is found in the cell inner membrane. Its pathway is cell wall biogenesis; peptidoglycan biosynthesis. In terms of biological role, involved in peptidoglycan biosynthesis. Transports lipid-linked peptidoglycan precursors from the inner to the outer leaflet of the cytoplasmic membrane. This chain is Probable lipid II flippase MurJ, found in Rhizobium meliloti (strain 1021) (Ensifer meliloti).